We begin with the raw amino-acid sequence, 326 residues long: Pyruvate dehydrogenase E1 component subunit beta (326 aa).

Glutamate 59 contacts thiamine diphosphate.

As to quaternary structure, heterodimer of an alpha and a beta chain. It depends on thiamine diphosphate as a cofactor.

The enzyme catalyses N(6)-[(R)-lipoyl]-L-lysyl-[protein] + pyruvate + H(+) = N(6)-[(R)-S(8)-acetyldihydrolipoyl]-L-lysyl-[protein] + CO2. Its function is as follows. The pyruvate dehydrogenase complex catalyzes the overall conversion of pyruvate to acetyl-CoA and CO(2). It contains multiple copies of three enzymatic components: pyruvate dehydrogenase (E1), dihydrolipoamide acetyltransferase (E2) and lipoamide dehydrogenase (E3). This is Pyruvate dehydrogenase E1 component subunit beta (pdhB) from Rickettsia felis (strain ATCC VR-1525 / URRWXCal2) (Rickettsia azadi).